The following is a 368-amino-acid chain: MSDNTVKIKKQTIDPTLTLEDVKKQLIEKGKKEGHLSHEEIAEKLQNFDIDSDQMDDFFDQLNDNDISLVNEKDSSDTDEKLNPSDLSAPPGVKINDPVRMYLKEIGRVNLLSAQEEIELAKRIEQGDEVAKSRLAEANLRLVVSIAKRYVGRGMLFLDLIQEGNMGLIKAVEKFDFNKGFKFSTYATWWIRQAITRAIADQARTIRIPVHMVETINKLIRVQRQLLQDLGRDPAPEEIGEEMDLPAEKVREILKIAQEPVSLETPIGEEDDSHLGDFIEDQEAQSPSDHAAYELLKEQLEDVLDTLTDREENVLRLRFGLDDGRTRTLEEVGKVFGVTRERIRQIEAKALRKLRHPSRSKRLKDFMD.

A sigma-70 factor domain-1 region spans residues 16 to 90 (TLTLEDVKKQ…KLNPSDLSAP (75 aa)). Residues 69–90 (LVNEKDSSDTDEKLNPSDLSAP) form a disordered region. The segment covering 71–83 (NEKDSSDTDEKLN) has biased composition (basic and acidic residues). The interval 135 to 205 (LAEANLRLVV…TRAIADQART (71 aa)) is sigma-70 factor domain-2. The Interaction with polymerase core subunit RpoC motif lies at 159 to 162 (DLIQ). Positions 214-291 (ETINKLIRVQ…QEAQSPSDHA (78 aa)) are sigma-70 factor domain-3. The interval 303–356 (VLDTLTDREENVLRLRFGLDDGRTRTLEEVGKVFGVTRERIRQIEAKALRKLRH) is sigma-70 factor domain-4. A DNA-binding region (H-T-H motif) is located at residues 329-348 (LEEVGKVFGVTRERIRQIEA).

It belongs to the sigma-70 factor family. RpoD/SigA subfamily. Interacts transiently with the RNA polymerase catalytic core formed by RpoA, RpoB, RpoC and RpoZ (2 alpha, 1 beta, 1 beta' and 1 omega subunit) to form the RNA polymerase holoenzyme that can initiate transcription. Interacts (via sigma-70 factor domain 4) with the phage G1 protein gp67; this inhibits rRNA synthesis. Interaction with phage G1 protein gp67 does not inhibit transcription in general, but selectively inhibits transcription from promoters that require interaction of the RNA polymerase alpha subunit with DNA sequences upstream of the -35 promoter element.

It is found in the cytoplasm. Functionally, sigma factors are initiation factors that promote the attachment of RNA polymerase to specific initiation sites and are then released. This sigma factor is the primary sigma factor during exponential growth. This Staphylococcus aureus (strain NCTC 8325 / PS 47) protein is RNA polymerase sigma factor SigA.